Here is a 236-residue protein sequence, read N- to C-terminus: Probable methylthioribulose-1-phosphate dehydratase (236 aa).

Positions 1 to 29 (MQNVQQPKKRKLSDEIIAEDEDYQRDPEH) are disordered. C103 contributes to the substrate binding site. The Zn(2+) site is built by H121, H123, and H201.

Belongs to the aldolase class II family. MtnB subfamily. It depends on Zn(2+) as a cofactor.

It localises to the cytoplasm. The enzyme catalyses 5-(methylsulfanyl)-D-ribulose 1-phosphate = 5-methylsulfanyl-2,3-dioxopentyl phosphate + H2O. Its pathway is amino-acid biosynthesis; L-methionine biosynthesis via salvage pathway; L-methionine from S-methyl-5-thio-alpha-D-ribose 1-phosphate: step 2/6. Catalyzes the dehydration of methylthioribulose-1-phosphate (MTRu-1-P) into 2,3-diketo-5-methylthiopentyl-1-phosphate (DK-MTP-1-P). The polypeptide is Probable methylthioribulose-1-phosphate dehydratase (Trichoplax adhaerens (Trichoplax reptans)).